The primary structure comprises 853 residues: DNA mismatch repair protein MutS (853 aa).

614–621 is a binding site for ATP; sequence GPNMGGKS.

The protein belongs to the DNA mismatch repair MutS family.

In terms of biological role, this protein is involved in the repair of mismatches in DNA. It is possible that it carries out the mismatch recognition step. This protein has a weak ATPase activity. The chain is DNA mismatch repair protein MutS from Shigella dysenteriae serotype 1 (strain Sd197).